A 469-amino-acid polypeptide reads, in one-letter code: 2-oxoisovalerate dehydrogenase subunit beta, mitochondrial (469 aa).

Residues 1 to 40 constitute a mitochondrion transit peptide; sequence MKRSTVVIRPSARALSRQASSQSFLLARSSALTSRQRRLY. A thiamine diphosphate-binding site is contributed by Y167. K(+)-binding residues include G194, L196, and T197.

In terms of assembly, heterotetramer of 2 alpha and 2 beta chains. The cofactor is thiamine diphosphate.

Its subcellular location is the mitochondrion matrix. It catalyses the reaction N(6)-[(R)-lipoyl]-L-lysyl-[protein] + 3-methyl-2-oxobutanoate + H(+) = N(6)-[(R)-S(8)-2-methylpropanoyldihydrolipoyl]-L-lysyl-[protein] + CO2. The branched-chain alpha-keto dehydrogenase complex catalyzes the overall conversion of alpha-keto acids to acyl-CoA and CO(2). It contains multiple copies of three enzymatic components: branched-chain alpha-keto acid decarboxylase (E1), lipoamide acyltransferase (E2) and lipoamide dehydrogenase (E3). In Chaetomium thermophilum (strain DSM 1495 / CBS 144.50 / IMI 039719) (Thermochaetoides thermophila), this protein is 2-oxoisovalerate dehydrogenase subunit beta, mitochondrial.